The chain runs to 302 residues: uncharacterized protein (302 aa).

Residue E48 is part of the active site.

The protein belongs to the PhzF family.

This is an uncharacterized protein from Clostridium acetobutylicum (strain ATCC 824 / DSM 792 / JCM 1419 / IAM 19013 / LMG 5710 / NBRC 13948 / NRRL B-527 / VKM B-1787 / 2291 / W).